The sequence spans 905 residues: V-type proton ATPase 116 kDa subunit a 1 (905 aa).

The Cytoplasmic segment spans residues 1–424 (MGDYVTPGEE…DAYGIATYRE (424 aa)). Residues 425-443 (INPAPYTMISFPFLFAVMF) form a helical membrane-spanning segment. Over 444-445 (GD) the chain is Lumenal. Residues 446–462 (MGHGAIMLLAALFFILK) form a helical membrane-spanning segment. Over 463–477 (EKQLEAARIKDEIFQ) the chain is Cytoplasmic. The helical transmembrane segment at 478-507 (TFFGGRYVIFLMGAFSIYTGFMYNDVFSKS) threads the bilayer. The Lumenal portion of the chain corresponds to 508–572 (INTFGSSWQN…EGNKLSFLNS (65 aa)). A helical membrane pass occupies residues 573–592 (MKMKMSVLFGIAQMTFGVLL). Residues 593 to 610 (SYQNFIYFKSDLDIKYMF) are Cytoplasmic-facing. The helical transmembrane segment at 611–631 (IPQMIFLSSIFIYLCIQILSK) threads the bilayer. The Lumenal portion of the chain corresponds to 632-699 (WLFFGAVGGT…YPGQATIEII (68 aa)). The chain crosses the membrane as a helical span at residues 700–719 (LVVLALVQVPIMLFAKPYFL). The Cytoplasmic segment spans residues 720–788 (YRRDKQQSRY…DVMVYQAIHT (69 aa)). A helical membrane pass occupies residues 789–813 (IEFVLGCVSHTASYLRLWALSLAHA). The Lumenal portion of the chain corresponds to 814–834 (QLSDVLWTMVFRNAFVLDGYT). Residues 835–873 (GAIATYILFFIFGSLSVFILVLMEGLSAFLHALRLHWVE) traverse the membrane as a helical segment. The Cytoplasmic portion of the chain corresponds to 874 to 905 (FQSKFYGGLGYEFAPFSFEKILAEEREAEENL).

Belongs to the V-ATPase 116 kDa subunit family. As to quaternary structure, V-ATPase is a heteromultimeric enzyme made up of two complexes: the ATP-hydrolytic V1 complex and the proton translocation V0 complex. The V1 complex consists of three catalytic AB heterodimers that form a heterohexamer, three peripheral stalks each consisting of EG heterodimers, one central rotor including subunits D and F, and the regulatory subunits C and H. The proton translocation complex V0 consists of the proton transport subunit a, a ring of proteolipid subunits c9c'', rotary subunit d, subunits e and f, and the accessory subunits vah-19/Ac45 and vah-20/PRR. Interacts with V-type proton ATPase subunit C vha-11. In terms of tissue distribution, ubiquitous expression in embryos. Expressed in gonads, intestine, neurons in the head and motoneurons in the ventral cord of larvae and adults. Expressed in the vulvae and spermathecal uterine valves. Weakly expressed in the pharynx. Specifically expressed in the nervous system.

It is found in the membrane. Its function is as follows. Subunit of the V0 complex of vacuolar(H+)-ATPase (V-ATPase), a multisubunit enzyme composed of a peripheral complex (V1) that hydrolyzes ATP and a membrane integral complex (V0) that translocates protons. V-ATPase is responsible for acidifying and maintaining the pH of intracellular compartments and in some cell types, is targeted to the plasma membrane, where it is responsible for acidifying the extracellular environment. Required for assembly and activity of the vacuolar ATPase. Regulates the size of gut granules during embryonic development. In neurons, required for necrotic cell death by promoting intracellular acidification. Required for cell death induced by hypoxia. Required for acidification of synaptic vesicles and the release of neurotransmitters from adult neurons. The polypeptide is V-type proton ATPase 116 kDa subunit a 1 (Caenorhabditis elegans).